The following is a 240-amino-acid chain: UDP-2,3-diacylglucosamine hydrolase (240 aa).

Mn(2+)-binding residues include Asp-8, His-10, Asp-41, Asn-79, and His-114. Asn-79–Arg-80 lines the substrate pocket. Asp-122, Ser-160, Asn-164, Lys-167, and His-195 together coordinate substrate. Positions 195 and 197 each coordinate Mn(2+).

This sequence belongs to the LpxH family. Mn(2+) serves as cofactor.

It localises to the cell inner membrane. It catalyses the reaction UDP-2-N,3-O-bis[(3R)-3-hydroxytetradecanoyl]-alpha-D-glucosamine + H2O = 2-N,3-O-bis[(3R)-3-hydroxytetradecanoyl]-alpha-D-glucosaminyl 1-phosphate + UMP + 2 H(+). The protein operates within glycolipid biosynthesis; lipid IV(A) biosynthesis; lipid IV(A) from (3R)-3-hydroxytetradecanoyl-[acyl-carrier-protein] and UDP-N-acetyl-alpha-D-glucosamine: step 4/6. Its function is as follows. Hydrolyzes the pyrophosphate bond of UDP-2,3-diacylglucosamine to yield 2,3-diacylglucosamine 1-phosphate (lipid X) and UMP by catalyzing the attack of water at the alpha-P atom. Involved in the biosynthesis of lipid A, a phosphorylated glycolipid that anchors the lipopolysaccharide to the outer membrane of the cell. This is UDP-2,3-diacylglucosamine hydrolase from Yersinia enterocolitica serotype O:8 / biotype 1B (strain NCTC 13174 / 8081).